The chain runs to 472 residues: 4-aminobutyrate aminotransferase (472 aa).

135–136 contributes to the pyridoxal 5'-phosphate binding site; the sequence is GA. Arginine 193 serves as a coordination point for substrate. An N6-(pyridoxal phosphate)lysine modification is found at lysine 327. Position 352 (threonine 352) interacts with pyridoxal 5'-phosphate.

The protein belongs to the class-III pyridoxal-phosphate-dependent aminotransferase family. As to quaternary structure, homodimer and homotetramer. Pyridoxal 5'-phosphate is required as a cofactor.

It localises to the cytoplasm. It carries out the reaction 4-aminobutanoate + 2-oxoglutarate = succinate semialdehyde + L-glutamate. The protein operates within amino-acid degradation; L-arginine degradation. Functionally, required for the degradation of gamma-aminobutyric acid (GABA), which is important for utilization of GABA as nitrogen source and for oxidative stress tolerance. Deaminates GABA to succinate semialdehyde, which in turn is converted to succinate by the succinate-semialdehyde dehydrogenase UGA2. May be involved in an alternative, arginase-independent arginine degradation pathway via GABA. This Kluyveromyces lactis (strain ATCC 8585 / CBS 2359 / DSM 70799 / NBRC 1267 / NRRL Y-1140 / WM37) (Yeast) protein is 4-aminobutyrate aminotransferase.